A 283-amino-acid chain; its full sequence is Homeobox protein BarH-like 2 (283 aa).

2 disordered regions span residues 107–141 and 198–283; these read AAAAAAETPGGEALASSESETEQPTPRQKKPRRSR and KGGQ…PPLS. Residues 122–132 show a composition bias toward polar residues; sequence SSESETEQPTP. A DNA-binding region (homeobox) is located at residues 139–198; the sequence is RSRTIFTELQLMGLEKKFQKQKYLSTPDRLDLAQSLGLTQLQVKTWYQNRRMKWKKMVLK. Residues 268–277 show a composition bias toward low complexity; it reads QPQELSEASS.

It belongs to the BAR homeobox family. As to expression, nervous system, particularly in the telencephalon, spinal cord, and dorsal root ganglia.

Its subcellular location is the nucleus. Its function is as follows. Transcription factor. Binds optimally to the DNA consensus sequence 5'-YYTAATGRTTTTY-3'. May control the expression of neural adhesion molecules such as L1 or Ng-CAM during embryonic development of both the central and peripherical nervous system. May be involved in controlling adhesive processes in keratinizing epithelia. The polypeptide is Homeobox protein BarH-like 2 (Barx2) (Mus musculus (Mouse)).